Consider the following 254-residue polypeptide: UPF0246 protein BDI_1226 (254 aa).

Belongs to the UPF0246 family.

The chain is UPF0246 protein BDI_1226 from Parabacteroides distasonis (strain ATCC 8503 / DSM 20701 / CIP 104284 / JCM 5825 / NCTC 11152).